A 477-amino-acid polypeptide reads, in one-letter code: Pup--protein ligase (477 aa).

Glu-16 serves as a coordination point for Mg(2+). Arg-60 contacts ATP. Mg(2+) is bound at residue Tyr-62. Asp-64 acts as the Proton acceptor in catalysis. A Mg(2+)-binding site is contributed by Glu-70. 2 residues coordinate ATP: Thr-73 and Trp-441.

This sequence belongs to the Pup ligase/Pup deamidase family. Pup-conjugating enzyme subfamily.

It carries out the reaction ATP + [prokaryotic ubiquitin-like protein]-L-glutamate + [protein]-L-lysine = ADP + phosphate + N(6)-([prokaryotic ubiquitin-like protein]-gamma-L-glutamyl)-[protein]-L-lysine.. It functions in the pathway protein degradation; proteasomal Pup-dependent pathway. The protein operates within protein modification; protein pupylation. Functionally, catalyzes the covalent attachment of the prokaryotic ubiquitin-like protein modifier Pup to the proteasomal substrate proteins, thereby targeting them for proteasomal degradation. This tagging system is termed pupylation. The ligation reaction involves the side-chain carboxylate of the C-terminal glutamate of Pup and the side-chain amino group of a substrate lysine. The chain is Pup--protein ligase from Corynebacterium kroppenstedtii (strain DSM 44385 / JCM 11950 / CIP 105744 / CCUG 35717).